Here is a 510-residue protein sequence, read N- to C-terminus: Maturase K (510 aa).

It belongs to the intron maturase 2 family. MatK subfamily.

The protein resides in the plastid. It localises to the chloroplast. Functionally, usually encoded in the trnK tRNA gene intron. Probably assists in splicing its own and other chloroplast group II introns. The sequence is that of Maturase K from Populus alba (White poplar).